The sequence spans 20 residues: Photosystem II stability/assembly factor HCF136, chloroplastic (20 aa).

Belongs to the Ycf48 family.

It is found in the plastid. The protein localises to the chloroplast thylakoid lumen. Functionally, essential for photosystem II (PSII) biogenesis; required for assembly of an early intermediate in PSII assembly that includes D2 (psbD) and cytochrome b559. This Spinacia oleracea (Spinach) protein is Photosystem II stability/assembly factor HCF136, chloroplastic.